Consider the following 482-residue polypeptide: Cobyric acid synthase (482 aa).

The region spanning Ala243–Phe430 is the GATase cobBQ-type domain. Cys325 functions as the Nucleophile in the catalytic mechanism. Residue His422 is part of the active site.

It belongs to the CobB/CobQ family. CobQ subfamily.

Its pathway is cofactor biosynthesis; adenosylcobalamin biosynthesis. Its function is as follows. Catalyzes amidations at positions B, D, E, and G on adenosylcobyrinic A,C-diamide. NH(2) groups are provided by glutamine, and one molecule of ATP is hydrogenolyzed for each amidation. This chain is Cobyric acid synthase, found in Ruegeria sp. (strain TM1040) (Silicibacter sp.).